Here is a 146-residue protein sequence, read N- to C-terminus: Leptin (146 aa).

Cysteines 96 and 146 form a disulfide.

The protein belongs to the leptin family.

The protein resides in the secreted. Its function is as follows. Key player in the regulation of energy balance and body weight control. Once released into the circulation, has central and peripheral effects by binding LEPR, found in many tissues, which results in the activation of several major signaling pathways. In the hypothalamus, acts as an appetite-regulating factor that induces a decrease in food intake and an increase in energy consumption by inducing anorexinogenic factors and suppressing orexigenic neuropeptides, also regulates bone mass and secretion of hypothalamo-pituitary-adrenal hormones. In the periphery, increases basal metabolism, influences reproductive function, regulates pancreatic beta-cell function and insulin secretion, is pro-angiogenic for endothelial cell and affects innate and adaptive immunity. In the arcuate nucleus of the hypothalamus, activates by depolarization POMC neurons inducing FOS and SOCS3 expression to release anorexigenic peptides and inhibits by hyperpolarization NPY neurons inducing SOCS3 with a consequent reduction on release of orexigenic peptides. In addition to its known satiety inducing effect, has a modulatory role in nutrient absorption. In the intestine, reduces glucose absorption by enterocytes by activating PKC and leading to a sequential activation of p38, PI3K and ERK signaling pathways which exerts an inhibitory effect on glucose absorption. Acts as a growth factor on certain tissues, through the activation of different signaling pathways increases expression of genes involved in cell cycle regulation such as CCND1, via JAK2-STAT3 pathway, or VEGFA, via MAPK1/3 and PI3K-AKT1 pathways. May also play an apoptotic role via JAK2-STAT3 pathway and up-regulation of BIRC5 expression. Pro-angiogenic, has mitogenic activity on vascular endothelial cells and plays a role in matrix remodeling by regulating the expression of matrix metalloproteinases (MMPs) and tissue inhibitors of metalloproteinases (TIMPs). In innate immunity, modulates the activity and function of neutrophils by increasing chemotaxis and the secretion of oxygen radicals. Increases phagocytosis by macrophages and enhances secretion of pro-inflammatory mediators. Increases cytotoxic ability of NK cells. Plays a pro-inflammatory role, in synergy with IL1B, by inducing NOS2 which promotes the production of IL6, IL8 and Prostaglandin E2, through a signaling pathway that involves JAK2, PI3K, MAP2K1/MEK1 and MAPK14/p38. In adaptive immunity, promotes the switch of memory T-cells towards T helper-1 cell immune responses. Increases CD4(+)CD25(-) T-cell proliferation and reduces autophagy during TCR (T-cell receptor) stimulation, through MTOR signaling pathway activation and BCL2 up-regulation. This Pongo pygmaeus (Bornean orangutan) protein is Leptin (LEP).